Consider the following 497-residue polypeptide: Lysophospholipid acyltransferase 5 (497 aa).

The next 6 membrane-spanning stretches (helical) occupy residues 31 to 51 (LLTI…ISVI), 74 to 94 (GLDT…VLLL), 100 to 120 (IFLA…YFYT), 173 to 193 (LELL…QFPF), 213 to 235 (AGVR…LRYL), and 264 to 286 (SLYK…GLTY). Active-site residues include N322 and H358. The chain crosses the membrane as a helical span at residues 339–361 (FLNNRTISYGAALGFLAVWHGYH). The N-linked (GlcNAc...) asparagine glycan is linked to N398. 2 consecutive transmembrane segments (helical) span residues 408 to 428 (FITL…AFVF) and 435 to 455 (IVVY…WAAF). Residues 469-497 (KLAGEDQKLQDSNTDKLVEEKKPEDKKSE) are disordered. The span at 470 to 497 (LAGEDQKLQDSNTDKLVEEKKPEDKKSE) shows a compositional bias: basic and acidic residues. The residue at position 480 (S480) is a Phosphoserine.

It belongs to the membrane-bound acyltransferase family. During gastrulation, expressed mainly along the midline in the presumptive mesoderm. During germ band elongation, expressed in mesoderm and endoderm primordia and in the cephalic furrow. Expression in mesoderm and endoderm lineages continues during germ band shortening. At the end of this process, no longer detected in somatic mesoderm or endoderm layer with expression restricted to anterior and posterior domains of the visceral mesoderm.

It is found in the endoplasmic reticulum. The protein localises to the membrane. It catalyses the reaction a 1-acyl-sn-glycero-3-phospho-L-serine + an acyl-CoA = a 1,2-diacyl-sn-glycero-3-phospho-L-serine + CoA. It carries out the reaction 1-(9Z-octadecenoyl)-sn-glycero-3-phospho-L-serine + (9Z)-hexadecenoyl-CoA = 1-(9Z-octadecenoyl)-2-(9Z-hexadecenoyl)-sn-glycero-3-phospho-L-serine + CoA. The catalysed reaction is a 1-acyl-sn-glycero-3-phosphocholine + an acyl-CoA = a 1,2-diacyl-sn-glycero-3-phosphocholine + CoA. The enzyme catalyses 1-hexadecanoyl-sn-glycero-3-phosphocholine + (9Z)-octadecenoyl-CoA = 1-hexadecanoyl-2-(9Z-octadecenoyl)-sn-glycero-3-phosphocholine + CoA. It catalyses the reaction (9Z,12Z)-octadecadienoyl-CoA + 1-hexadecanoyl-sn-glycero-3-phosphocholine = 1-hexadecanoyl-2-(9Z,12Z-octadecadienoyl)-sn-glycero-3-phosphocholine + CoA. It carries out the reaction (5Z,8Z,11Z,14Z)-eicosatetraenoyl-CoA + 1-hexadecanoyl-sn-glycero-3-phosphocholine = 1-hexadecanoyl-2-(5Z,8Z,11Z,14Z-eicosatetraenoyl)-sn-glycero-3-phosphocholine + CoA. The catalysed reaction is (9Z)-hexadecenoyl-CoA + 1-hexadecanoyl-sn-glycero-3-phosphocholine = 1-hexadecanoyl-2-(9Z-hexadecenoyl)-sn-glycero-3-phosphocholine + CoA. It participates in lipid metabolism; phospholipid metabolism. Its function is as follows. Acyltransferase that mediates the acylation of lysophospholipids to produce phospholipids (glycerophospholipids). Highest activity with lysophosphatidylcholine (1-acyl-sn-glycero-3-phosphocholine or LPC) producing phosphatidylcholine (1,2-diacyl-sn-glycero-3-phosphocholine or PC) (LPCAT activity), but also converts lysophosphatidylserine (1-acyl-2-hydroxy-sn-glycero-3-phospho-L-serine or LPS) to phosphatidylserine (1,2-diacyl-sn-glycero-3-phospho-L-serine or PS) (LPSAT activity). Has a preference for unsaturated fatty acids of at least 16 carbons such as oleoyl-CoA ((9Z)-octadecenoyl-CoA) and palmitoleoyl-CoA ((9Z)-hexadecenoyl-CoA). Glycerophospholipids are important structural and functional components of cellular membrane, acyl-chain remodeling regulates the molecular species distribution of glycerophospholipids which can affect membrane fluidity and curvature. Essential for fertility and viability together with Oysgedart (Oys). Required for germ cells to migrate into the mesoderm. This chain is Lysophospholipid acyltransferase 5, found in Drosophila melanogaster (Fruit fly).